The sequence spans 193 residues: Large ribosomal subunit protein uL5 (193 aa).

Belongs to the universal ribosomal protein uL5 family. As to quaternary structure, part of the 50S ribosomal subunit; part of the 5S rRNA/L5/L18/L25 subcomplex. Contacts the 5S rRNA and the P site tRNA. Forms a bridge to the 30S subunit in the 70S ribosome.

Its function is as follows. This is one of the proteins that bind and probably mediate the attachment of the 5S RNA into the large ribosomal subunit, where it forms part of the central protuberance. In the 70S ribosome it contacts protein S13 of the 30S subunit (bridge B1b), connecting the 2 subunits; this bridge is implicated in subunit movement. Contacts the P site tRNA; the 5S rRNA and some of its associated proteins might help stabilize positioning of ribosome-bound tRNAs. The sequence is that of Large ribosomal subunit protein uL5 from Renibacterium salmoninarum (strain ATCC 33209 / DSM 20767 / JCM 11484 / NBRC 15589 / NCIMB 2235).